A 369-amino-acid polypeptide reads, in one-letter code: 3-dehydroquinate synthase (369 aa).

Residues 72–77 (SGEKEK), 130–131 (TT), Lys-142, and Lys-151 each bind NAD(+). Residues Glu-184, His-247, and His-264 each coordinate Zn(2+).

It belongs to the sugar phosphate cyclases superfamily. Dehydroquinate synthase family. Co(2+) is required as a cofactor. Zn(2+) serves as cofactor. It depends on NAD(+) as a cofactor.

The protein resides in the cytoplasm. It carries out the reaction 7-phospho-2-dehydro-3-deoxy-D-arabino-heptonate = 3-dehydroquinate + phosphate. It participates in metabolic intermediate biosynthesis; chorismate biosynthesis; chorismate from D-erythrose 4-phosphate and phosphoenolpyruvate: step 2/7. Its function is as follows. Catalyzes the conversion of 3-deoxy-D-arabino-heptulosonate 7-phosphate (DAHP) to dehydroquinate (DHQ). The polypeptide is 3-dehydroquinate synthase (Bacillus cytotoxicus (strain DSM 22905 / CIP 110041 / 391-98 / NVH 391-98)).